A 398-amino-acid polypeptide reads, in one-letter code: Proteasome-activating nucleotidase (398 aa).

Residues I18–P59 are a coiled coil. Residues G183–L188 and H322 contribute to the ATP site. Positions M396–G398 are docks into pockets in the proteasome alpha-ring to cause gate opening.

It belongs to the AAA ATPase family. Homohexamer. The hexameric complex has a two-ring architecture resembling a top hat that caps the 20S proteasome core at one or both ends. Upon ATP-binding, the C-terminus of PAN interacts with the alpha-rings of the proteasome core by binding to the intersubunit pockets.

It localises to the cytoplasm. In terms of biological role, ATPase which is responsible for recognizing, binding, unfolding and translocation of substrate proteins into the archaeal 20S proteasome core particle. Is essential for opening the gate of the 20S proteasome via an interaction with its C-terminus, thereby allowing substrate entry and access to the site of proteolysis. Thus, the C-termini of the proteasomal ATPase function like a 'key in a lock' to induce gate opening and therefore regulate proteolysis. Unfolding activity requires energy from ATP hydrolysis, whereas ATP binding alone promotes ATPase-20S proteasome association which triggers gate opening, and supports translocation of unfolded substrates. This chain is Proteasome-activating nucleotidase, found in Thermococcus onnurineus (strain NA1).